The following is a 121-amino-acid chain: Large ribosomal subunit protein uL14c (121 aa).

Belongs to the universal ribosomal protein uL14 family. As to quaternary structure, part of the 50S ribosomal subunit.

It is found in the plastid. The protein resides in the chloroplast. Its function is as follows. Binds to 23S rRNA. This chain is Large ribosomal subunit protein uL14c, found in Euglena gracilis.